Consider the following 260-residue polypeptide: Trans-aconitate 2-methyltransferase (260 aa).

It belongs to the methyltransferase superfamily. Tam family.

It localises to the cytoplasm. The enzyme catalyses trans-aconitate + S-adenosyl-L-methionine = (E)-3-(methoxycarbonyl)pent-2-enedioate + S-adenosyl-L-homocysteine. Its function is as follows. Catalyzes the S-adenosylmethionine monomethyl esterification of trans-aconitate. The polypeptide is Trans-aconitate 2-methyltransferase (Paracidovorax citrulli (strain AAC00-1) (Acidovorax citrulli)).